A 276-amino-acid polypeptide reads, in one-letter code: Thymidylate synthase (276 aa).

Arginine 26 contributes to the dUMP binding site. Histidine 56 contributes to the (6R)-5,10-methylene-5,6,7,8-tetrahydrofolate binding site. Residue 131–132 (RR) coordinates dUMP. The Nucleophile role is filled by cysteine 151. DUMP-binding positions include 178–181 (RSAD), asparagine 189, and 219–221 (HIY). Aspartate 181 contributes to the (6R)-5,10-methylene-5,6,7,8-tetrahydrofolate binding site. Alanine 275 is a (6R)-5,10-methylene-5,6,7,8-tetrahydrofolate binding site.

The protein belongs to the thymidylate synthase family. Bacterial-type ThyA subfamily. In terms of assembly, homodimer.

The protein resides in the cytoplasm. The enzyme catalyses dUMP + (6R)-5,10-methylene-5,6,7,8-tetrahydrofolate = 7,8-dihydrofolate + dTMP. It functions in the pathway pyrimidine metabolism; dTTP biosynthesis. Catalyzes the reductive methylation of 2'-deoxyuridine-5'-monophosphate (dUMP) to 2'-deoxythymidine-5'-monophosphate (dTMP) while utilizing 5,10-methylenetetrahydrofolate (mTHF) as the methyl donor and reductant in the reaction, yielding dihydrofolate (DHF) as a by-product. This enzymatic reaction provides an intracellular de novo source of dTMP, an essential precursor for DNA biosynthesis. In Polaromonas naphthalenivorans (strain CJ2), this protein is Thymidylate synthase.